A 344-amino-acid polypeptide reads, in one-letter code: Methionine import ATP-binding protein MetN 1 (344 aa).

Positions 2 to 241 (IELRNLSQRF…PHHEVTRALI (240 aa)) constitute an ABC transporter domain. 38 to 45 (GRSGAGKS) serves as a coordination point for ATP.

This sequence belongs to the ABC transporter superfamily. Methionine importer (TC 3.A.1.24) family. In terms of assembly, the complex is composed of two ATP-binding proteins (MetN), two transmembrane proteins (MetI) and a solute-binding protein (MetQ).

It is found in the cell inner membrane. The enzyme catalyses L-methionine(out) + ATP + H2O = L-methionine(in) + ADP + phosphate + H(+). The catalysed reaction is D-methionine(out) + ATP + H2O = D-methionine(in) + ADP + phosphate + H(+). Its function is as follows. Part of the ABC transporter complex MetNIQ involved in methionine import. Responsible for energy coupling to the transport system. In Burkholderia lata (strain ATCC 17760 / DSM 23089 / LMG 22485 / NCIMB 9086 / R18194 / 383), this protein is Methionine import ATP-binding protein MetN 1.